The primary structure comprises 357 residues: Phosphoribosylformylglycinamidine cyclo-ligase (357 aa).

This sequence belongs to the AIR synthase family.

The protein localises to the cytoplasm. It carries out the reaction 2-formamido-N(1)-(5-O-phospho-beta-D-ribosyl)acetamidine + ATP = 5-amino-1-(5-phospho-beta-D-ribosyl)imidazole + ADP + phosphate + H(+). It functions in the pathway purine metabolism; IMP biosynthesis via de novo pathway; 5-amino-1-(5-phospho-D-ribosyl)imidazole from N(2)-formyl-N(1)-(5-phospho-D-ribosyl)glycinamide: step 2/2. The polypeptide is Phosphoribosylformylglycinamidine cyclo-ligase (Rhodopseudomonas palustris (strain BisB18)).